Here is a 287-residue protein sequence, read N- to C-terminus: Ethylene-responsive transcription factor ERF116 (287 aa).

Positions 80–140 (YPVGVRPRPS…ASSGSAVSSS (61 aa)) form a DNA-binding region, AP2/ERF.

Belongs to the AP2/ERF transcription factor family. ERF subfamily.

Its subcellular location is the nucleus. Its function is as follows. Probably acts as a transcriptional activator. Binds to the GCC-box pathogenesis-related promoter element. May be involved in the regulation of gene expression by stress factors and by components of stress signal transduction pathways. This chain is Ethylene-responsive transcription factor ERF116 (ERF116), found in Arabidopsis thaliana (Mouse-ear cress).